Consider the following 645-residue polypeptide: Protein hrpC2 (645 aa).

7 consecutive transmembrane segments (helical) span residues 18–34 (VAIA…MILP), 43–59 (LLGI…MVTM), 108–124 (LVVG…FLII), 201–217 (IAGL…GIVV), 243–259 (VSQI…GVMI), 285–301 (ARAL…FAFV), and 308–324 (LFLL…YTIW). The segment at 334–354 (DQRKLPSASRKGAKGEAPHIR) is disordered.

Belongs to the FHIPEP (flagella/HR/invasion proteins export pore) family.

The protein localises to the cell inner membrane. In terms of biological role, involved in the secretion of a proteinaceous elicitor of the hypersensitivity response in plants. The sequence is that of Protein hrpC2 (hrpC2) from Xanthomonas euvesicatoria.